The sequence spans 493 residues: Lysine--tRNA ligase (493 aa).

Mg(2+) contacts are provided by E402 and E409.

The protein belongs to the class-II aminoacyl-tRNA synthetase family. As to quaternary structure, homodimer. Mg(2+) is required as a cofactor.

It is found in the cytoplasm. The catalysed reaction is tRNA(Lys) + L-lysine + ATP = L-lysyl-tRNA(Lys) + AMP + diphosphate. This Ureaplasma parvum serovar 3 (strain ATCC 27815 / 27 / NCTC 11736) protein is Lysine--tRNA ligase.